The primary structure comprises 157 residues: Small ribosomal subunit protein uS7 (157 aa).

This sequence belongs to the universal ribosomal protein uS7 family. As to quaternary structure, part of the 30S ribosomal subunit. Contacts proteins S9 and S11.

In terms of biological role, one of the primary rRNA binding proteins, it binds directly to 16S rRNA where it nucleates assembly of the head domain of the 30S subunit. Is located at the subunit interface close to the decoding center, probably blocks exit of the E-site tRNA. The sequence is that of Small ribosomal subunit protein uS7 from Caldicellulosiruptor bescii (strain ATCC BAA-1888 / DSM 6725 / KCTC 15123 / Z-1320) (Anaerocellum thermophilum).